Reading from the N-terminus, the 3351-residue chain is Apolipophorins (3351 aa).

Positions 1–25 (MARMKYNIALIGILASVLLTIAVNA) are cleaved as a signal peptide. The Vitellogenin domain occupies 43-641 (YIPGNYYDYS…SQHGFLPRSS (599 aa)). 7 N-linked (GlcNAc...) asparagine glycosylation sites follow: N67, N644, N1514, N1744, N1932, N1979, and N2822. Positions 2786–2952 (LRGHVVDGKH…DYGVGKCTAI (167 aa)) constitute a VWFD domain.

Interacts with Nrx-1 (via cytoplasmic domain); the interaction supports apolpp/ApoLI protein stability. May be modified covalently by lipidation. In terms of processing, cleaved into 2 chains by furin protease. However, prevention of cleavage does not impair its function. During stage 12, it is highly present throughout the yolk sac. By late stage 14, it localizes in the lateral fat body cells. Starting at stage 14, it localizes to the apodemes. Component of hemolymph clots (at protein level). Expressed in the amniosera. Expressed in rhabdomere of photoreceptor cells in retina (at protein level). In terms of tissue distribution, expressed in rhabdomere of photoreceptor cells in retina (at protein level). As to expression, expressed in simper cells as well as interphotoreceptor matrix (at protein level).

The protein resides in the secreted. It localises to the cell projection. The protein localises to the rhabdomere. Functionally, constitutes the major component of lipophorin, which mediates transport for various types of lipids in hemolymph. Acts by forming lipoprotein particles that bind lipoproteins and lipids. Also involved in the transport of hydrophobic ligands like juvenile hormones, pheromone hydrocarbons and carotenoids. Required for morphogens wingless (wg) and hedgehog (hh) function, probably by acting as vehicles for the movement of wg and hh, explaining how covalently lipidated wg and hh can spread over long distances. May also be involved in transport and/or metabolism of heme. Involved in yolk granule formation. May be a component of yolk incorporated into yolk granules via yl/yolkless-mediated endocytosis and the endolysosomal pathway. The chain is Apolipophorins from Drosophila melanogaster (Fruit fly).